Here is a 194-residue protein sequence, read N- to C-terminus: Small COPII coat GTPase SAR1B (194 aa).

Residues 2-4 (FLV) carry the STAR; SAR1-N-terminal activation recruitment. Required for the activation and subsequent recruitment to ER membrane motif. The segment at 10–14 (MFLWL) is mediates recruitment to ER membranes. GDP contacts are provided by N30, A31, G32, K33, T34, and T35. GTP is bound at residue N30. GTP contacts are provided by G32, K33, T34, and T35. Position 70 (D70) interacts with Mg(2+). Positions 131, 133, and 172 each coordinate GDP. GTP-binding residues include K131, D133, and I172.

Belongs to the small GTPase superfamily. SAR1 family. In terms of assembly, homodimer; upon association with membrane. Part of the coat protein complex II/COPII, composed of SEC23/24 and SEC13/31 heterodimers, that it helps recruit and assemble on endoplasmic reticulum (ER) membranes at ER exit sites.

It is found in the endoplasmic reticulum membrane. The protein resides in the golgi apparatus. Its subcellular location is the golgi stack membrane. It localises to the cytoplasm. The protein localises to the cytosol. The enzyme catalyses GTP + H2O = GDP + phosphate + H(+). With respect to regulation, small GTPases activation is mediated by guanine exchange factors (GEF), while inactivation through hydrolysis of the bound GTP is stimulated by GTPase activating proteins (GAP). Its function is as follows. Small GTPase that cycles between an active GTP-bound and an inactive GDP-bound state and mainly functions in vesicle-mediated endoplasmic reticulum (ER) to Golgi transport. The active GTP-bound form inserts into the endoplasmic reticulum membrane where it recruits the remainder of the coat protein complex II/COPII. The coat protein complex II assembling and polymerizing on endoplasmic reticulum membrane is responsible for both the sorting of cargos and the deformation and budding of membranes into vesicles destined to the Golgi. This Dictyostelium discoideum (Social amoeba) protein is Small COPII coat GTPase SAR1B (sarB).